Consider the following 192-residue polypeptide: MYQELIRNELTEAASVLQAFLADEQNLKDIEAAAKLLADSFKQEGKVLSCGNGGSHCDAMHFAEELTGRYRENRPGYAGIAISDPSHLSCVSNDFGYDYVFSRYVEAVGRRGDVLLGISTSGNSGNILKAIEAAHAKGMKVIALTGKDGGKMAGLADVEIRVPHFGYADRIQEVHIKVIHILIQLVEKEMAK.

Residues leucine 37–lysine 192 form the SIS domain. Asparagine 52 to glycine 54 serves as a coordination point for substrate. Residues histidine 61 and glutamate 65 each coordinate Zn(2+). Residues glutamate 65, asparagine 93 to aspartate 94, serine 119 to serine 121, serine 124, and glutamine 172 each bind substrate. Positions 172 and 180 each coordinate Zn(2+).

This sequence belongs to the SIS family. GmhA subfamily. In terms of assembly, homotetramer. Requires Zn(2+) as cofactor.

Its subcellular location is the cytoplasm. It catalyses the reaction 2 D-sedoheptulose 7-phosphate = D-glycero-alpha-D-manno-heptose 7-phosphate + D-glycero-beta-D-manno-heptose 7-phosphate. Its pathway is carbohydrate biosynthesis; D-glycero-D-manno-heptose 7-phosphate biosynthesis; D-glycero-alpha-D-manno-heptose 7-phosphate and D-glycero-beta-D-manno-heptose 7-phosphate from sedoheptulose 7-phosphate: step 1/1. Functionally, catalyzes the isomerization of sedoheptulose 7-phosphate in D-glycero-D-manno-heptose 7-phosphate. The polypeptide is Phosphoheptose isomerase (Aeromonas hydrophila subsp. hydrophila (strain ATCC 7966 / DSM 30187 / BCRC 13018 / CCUG 14551 / JCM 1027 / KCTC 2358 / NCIMB 9240 / NCTC 8049)).